A 668-amino-acid chain; its full sequence is MAAATGAQDRRDGGEEALMRLADARVAIEGVNLEIDGGRFAAKVVAGWEVAVEADIFCDGHDSIDAAVLHRQRGTDDWIEVRMEFLVNDRWQAHVTFAENAFHELTFLAWRDLYTTWRKEVAKKLAAGQKIDLELEEGRRLLQSVETAGAEDRALVDRILGEDGADQEAGARFARMSSPEAVAAMKRCAPRTNLTCYKILPIFADREAAAFSAWYEMMPRSQSDDPERHGTFDDVIRKLPYVRDLGFDVLYFTPIHPIGRVNRKGRNNSLTPAPDDPGSPYAIGSEEGGHDAIHPELGDFESFGRLVEAAHAHGLEIALDFAIQCAPDHPWIREHPEWFDWRPDGTIKFAENPPKKYEDIVNVHFYRGALPELWYALRDVVLFWVEKGVKIFRVDNPHTKPFPFWEWMIGEVQSQHPDVIFLAEAFTRPKVMKRLGKVGYGQSYSYFTWRNTKAELIDYLTELTTEECRHYMRPNFFANTPDINPVYLQHSGRAGFRVRLALAATLGGNYGLYNGYEICEATPVPGKEEYFNSEKYQLRAWDFDQPGHIQDDIRLMNHIRRTHPAMRDFTRLRFYDAHNDSVLAYGKSTEDKQDFLLFHVNLDPHAAQTFEFEVPLWEFGLPDDASVEVEDLLNGNRFTWHGKWQWLELDPQTRPYAVWRLYAPGMPR.

The interval 263-288 (RKGRNNSLTPAPDDPGSPYAIGSEEG) is disordered. Residues Lys264, Gln324, and Asp359 each coordinate alpha-maltose 1-phosphate. Asp395 acts as the Nucleophile in catalysis. Asn396 is a binding site for alpha-maltose 1-phosphate. The active-site Proton donor is the Glu424. Residue 535 to 536 (KY) coordinates alpha-maltose 1-phosphate.

Belongs to the glycosyl hydrolase 13 family. GlgE subfamily. In terms of assembly, homodimer.

It catalyses the reaction alpha-maltose 1-phosphate + [(1-&gt;4)-alpha-D-glucosyl](n) = [(1-&gt;4)-alpha-D-glucosyl](n+2) + phosphate. In terms of biological role, maltosyltransferase that uses maltose 1-phosphate (M1P) as the sugar donor to elongate linear or branched alpha-(1-&gt;4)-glucans. Is involved in a branched alpha-glucan biosynthetic pathway from trehalose, together with TreS, Mak and GlgB. In Cereibacter sphaeroides (strain ATCC 17023 / DSM 158 / JCM 6121 / CCUG 31486 / LMG 2827 / NBRC 12203 / NCIMB 8253 / ATH 2.4.1.) (Rhodobacter sphaeroides), this protein is Alpha-1,4-glucan:maltose-1-phosphate maltosyltransferase.